Here is a 187-residue protein sequence, read N- to C-terminus: Large ribosomal subunit protein uL6 (187 aa).

Belongs to the universal ribosomal protein uL6 family. Part of the 50S ribosomal subunit.

Functionally, this protein binds to the 23S rRNA, and is important in its secondary structure. It is located near the subunit interface in the base of the L7/L12 stalk, and near the tRNA binding site of the peptidyltransferase center. In Roseiflexus sp. (strain RS-1), this protein is Large ribosomal subunit protein uL6.